The primary structure comprises 539 residues: Chaperonin GroEL 1 (539 aa).

Residues 29-32, 86-90, Gly-413, and Asp-495 contribute to the ATP site; these read TLGP and DGTTT.

It belongs to the chaperonin (HSP60) family. Forms a cylinder of 14 subunits composed of two heptameric rings stacked back-to-back. Interacts with the co-chaperonin GroES.

The protein localises to the cytoplasm. It carries out the reaction ATP + H2O + a folded polypeptide = ADP + phosphate + an unfolded polypeptide.. Functionally, together with its co-chaperonin GroES, plays an essential role in assisting protein folding. The GroEL-GroES system forms a nano-cage that allows encapsulation of the non-native substrate proteins and provides a physical environment optimized to promote and accelerate protein folding. This chain is Chaperonin GroEL 1, found in Mycobacterium bovis (strain ATCC BAA-935 / AF2122/97).